The following is a 317-amino-acid chain: Porphobilinogen deaminase (317 aa).

C245 carries the post-translational modification S-(dipyrrolylmethanemethyl)cysteine.

It belongs to the HMBS family. Monomer. Requires dipyrromethane as cofactor.

It catalyses the reaction 4 porphobilinogen + H2O = hydroxymethylbilane + 4 NH4(+). It participates in porphyrin-containing compound metabolism; protoporphyrin-IX biosynthesis; coproporphyrinogen-III from 5-aminolevulinate: step 2/4. It functions in the pathway porphyrin-containing compound metabolism; chlorophyll biosynthesis. Functionally, tetrapolymerization of the monopyrrole PBG into the hydroxymethylbilane pre-uroporphyrinogen in several discrete steps. The protein is Porphobilinogen deaminase of Prochlorococcus marinus (strain MIT 9313).